A 442-amino-acid chain; its full sequence is Cyclic adenylate deaminase (442 aa).

It belongs to the metallo-dependent hydrolases superfamily. Adenosine and AMP deaminases family. Zn(2+) is required as a cofactor.

The enzyme catalyses 3',5'-cyclic AMP + H2O + H(+) = 3',5'-cyclic IMP + NH4(+). In terms of biological role, deaminates cAMP into cIMP, thereby repressing cAMP dependent metabolism or genes. This chain is Cyclic adenylate deaminase (add), found in Leptospira interrogans serogroup Icterohaemorrhagiae serovar copenhageni (strain Fiocruz L1-130).